Consider the following 341-residue polypeptide: Limbic system-associated membrane protein (341 aa).

The first 28 residues, 1–28 (MVGRVQPDRKQLPLVLLRLLCLLPTGLP), serve as a signal peptide directing secretion. Ig-like domains follow at residues 29-122 (VRSV…PKTS), 132-214 (PKIS…VKVT), and 219-304 (PTIT…ASLV). 2 N-linked (GlcNAc...) asparagine glycosylation sites follow: N40 and N66. A disulfide bond links C53 and C111. A Phosphotyrosine modification is found at Y94. N-linked (GlcNAc...) asparagine glycosylation is found at N136 and N148. Intrachain disulfides connect C153–C197 and C239–C290. N-linked (GlcNAc...) asparagine glycosylation is found at N279, N287, and N300.

Belongs to the immunoglobulin superfamily. IgLON family.

It localises to the cell membrane. Functionally, mediates selective neuronal growth and axon targeting. Contributes to the guidance of developing axons and remodeling of mature circuits in the limbic system. Essential for normal growth of the hippocampal mossy fiber projection. The polypeptide is Limbic system-associated membrane protein (Lsamp) (Mus musculus (Mouse)).